The primary structure comprises 104 residues: Putative ankyrin repeat protein L677 (104 aa).

ANK repeat units follow at residues phenylalanine 16 to leucine 43, aspartate 44 to valine 73, and leucine 75 to isoleucine 102.

This chain is Putative ankyrin repeat protein L677, found in Acanthamoeba polyphaga (Amoeba).